The following is a 485-amino-acid chain: Aspartyl/glutamyl-tRNA(Asn/Gln) amidotransferase subunit B (485 aa).

The protein belongs to the GatB/GatE family. GatB subfamily. As to quaternary structure, heterotrimer of A, B and C subunits.

The catalysed reaction is L-glutamyl-tRNA(Gln) + L-glutamine + ATP + H2O = L-glutaminyl-tRNA(Gln) + L-glutamate + ADP + phosphate + H(+). It catalyses the reaction L-aspartyl-tRNA(Asn) + L-glutamine + ATP + H2O = L-asparaginyl-tRNA(Asn) + L-glutamate + ADP + phosphate + 2 H(+). Allows the formation of correctly charged Asn-tRNA(Asn) or Gln-tRNA(Gln) through the transamidation of misacylated Asp-tRNA(Asn) or Glu-tRNA(Gln) in organisms which lack either or both of asparaginyl-tRNA or glutaminyl-tRNA synthetases. The reaction takes place in the presence of glutamine and ATP through an activated phospho-Asp-tRNA(Asn) or phospho-Glu-tRNA(Gln). The chain is Aspartyl/glutamyl-tRNA(Asn/Gln) amidotransferase subunit B from Borrelia duttonii (strain Ly).